Consider the following 279-residue polypeptide: MALSQKEQDIQMMLAAQCHLGTKNCHYQMERYMYRRRQDGIYIINLEKTYEKLQMAARIIVAIENPQDICVLSARPYGQRAVFKFAQYLGCKSMAGRHTPGTFTNQIQKAFEEPRLLILTDPRTDHQPVKESSYMNIPTIAFCDTDSPLTHVDVAIPANNKGKHSIGVLYFLLARMVLEMRDQINVTNPWSVPVDLFFYREPEEAKEAGEEETFEAEGYALPAPVGAAENWGEAAAPAPEAAGYDGAAAAGGFEAAAGFEAAAPPVAGYVAPEAFGGAF.

Belongs to the universal ribosomal protein uS2 family. As to quaternary structure, component of the small ribosomal subunit. Mature ribosomes consist of a small (40S) and a large (60S) subunit. The 40S subunit contains about 33 different proteins and 1 molecule of RNA (18S). The 60S subunit contains about 49 different proteins and 3 molecules of RNA (25S, 5.8S and 5S). Interacts with ribosomal protein S21.

It is found in the cytoplasm. In terms of biological role, required for the assembly and/or stability of the 40S ribosomal subunit. Required for the processing of the 20S rRNA-precursor to mature 18S rRNA in a late step of the maturation of 40S ribosomal subunits. The protein is Small ribosomal subunit protein uS2 of Chlamydomonas reinhardtii (Chlamydomonas smithii).